The sequence spans 460 residues: MAHSRARRRKRASATQLYQTCKAAGTCPSDIIPKVEHNTIADQILKWGSLGVFFGGLGIGTGSGTGGRTGYIPLQSTPRPEIPSGPTTRPPILVDTVAPGDPSIVSLVEESAIINSGAPELVPPSHGGFEITTSESTTPAILDVSVTTHTTSTSVFRNPSFADPSVVQSQPAVEAGGHILISTSTISSHPVEEIPLDTFIVSSSDSNPASSTPIPASGARPRIGLYSKALHQVQVTDPAFLSSPQRLITFDNPAYEGEDVSLEFAHNTIHQPPDDAFMDIIRLHRPAIQSRRGRVRFSRIGQRGSMYTRSGKHIGGRIHFYQDISPISAAAEEIELHPLVATAHDTSLFDIYAEPDPDFTEEPVPLSFSTSTPFQRSSVSATPWGNTTVPLSLPGDMFVQPGPDIIFPTASTTTPYSPVTPALPTGPVFISGATFYLYPAWYFARKRRKRVSLFFADVAA.

Positions 1–12 (MAHSRARRRKRA) match the Nuclear localization signal motif. A disulfide bridge connects residues Cys21 and Cys27. A Nuclear localization signal motif is present at residues 443 to 451 (FARKRRKRV).

This sequence belongs to the papillomaviridae L2 protein family. Interacts with major capsid protein L1. Interacts with E2; this interaction inhibits E2 transcriptional activity but not the DNA replication function E2. Interacts with host GADD45GIP1. Interacts with host HSPA8; this interaction is required for L2 nuclear translocation. Interacts with host importins KPNB2 and KPNB3. Forms a complex with importin alpha2-beta1 heterodimers via interaction with the importin alpha2 adapter. Interacts with host DYNLT1; this interaction is essential for virus intracellular transport during entry. Interacts (via C-terminus) with host retromer subunits VPS35 and VPS29. In terms of processing, highly phosphorylated.

The protein localises to the virion. It is found in the host nucleus. Its subcellular location is the host early endosome. It localises to the host Golgi apparatus. Its function is as follows. Minor protein of the capsid that localizes along the inner surface of the virion, within the central cavities beneath the L1 pentamers. Plays a role in capsid stabilization through interaction with the major capsid protein L1. Once the virion enters the host cell, L2 escorts the genomic DNA into the nucleus by promoting escape from the endosomal compartments and traffic through the host Golgi network. Mechanistically, the C-terminus of L2 possesses a cell-penetrating peptide that protudes from the host endosome, interacts with host cytoplasmic retromer cargo and thereby mediates the capsid delivery to the host trans-Golgi network. Plays a role through its interaction with host dynein in the intracellular microtubule-dependent transport of viral capsid toward the nucleus. Mediates the viral genome import into the nucleus through binding to host importins. Once within the nucleus, L2 localizes viral genomes to host PML bodies in order to activate early gene expression for establishment of infection. Later on, promotes late gene expression by interacting with the viral E2 protein and by inhibiting its transcriptional activation functions. During virion assembly, encapsidates the genome by direct interaction with the viral DNA. The polypeptide is Minor capsid protein L2 (Homo sapiens (Human)).